We begin with the raw amino-acid sequence, 411 residues long: Putative odorant receptor 59c (411 aa).

Residues 1–46 (MTKFFFKRLQTAPLDQEVSSLDASDYYYRIAFFLGWTPPKGALLRW) are Cytoplasmic-facing. A helical transmembrane segment spans residues 47–67 (IYSLWTLTTMWLGIVYLPLGL). Residues 68–86 (SLTYVKHFDRFTPTEFLTS) are Extracellular-facing. Residues 87–107 (LQVDINCIGNVIKSCVTYSQM) form a helical membrane-spanning segment. Over 108–139 (WRFRRMNELISSLDKRCVTTTQRRIFHKMVAR) the chain is Cytoplasmic. The helical transmembrane segment at 140–160 (VNLIVILFLSTYLGFCFLTLF) threads the bilayer. Residues 161-185 (TSVFAGKAPWQLYNPLVDWRKGHWQ) lie on the Extracellular side of the membrane. Residues 186 to 206 (LWIASILEYCVVSIGTMQELM) traverse the membrane as a helical segment. At 207 to 271 (SDTYAIVFIS…QIIRPILSIT (65 aa)) the chain is on the cytoplasmic side. Residues 272-292 (IFAQFMLVGIDLGLAAISILF) traverse the membrane as a helical segment. The Extracellular segment spans residues 293–296 (FPNT). Residues 297–317 (IWTIMANVSFIVAICTESFPC) traverse the membrane as a helical segment. Residues 318–369 (CMLCEHLIEDSVHVSNALFHSNWITADRSYKSAVLYFLHRAQQPIQFTAGSI) are Cytoplasmic-facing. The chain crosses the membrane as a helical span at residues 370–390 (FPISVQSNIAVAKFAFTIITI). The Extracellular portion of the chain corresponds to 391–411 (VNQMNLGEKFFSDRSNGDINP).

Belongs to the insect chemoreceptor superfamily. Heteromeric odorant receptor channel (TC 1.A.69) family. Or2a subfamily. As to quaternary structure, interacts with Orco. Complexes exist early in the endomembrane system in olfactory sensory neurons (OSNs), coupling these complexes to the conserved ciliary trafficking pathway. In terms of tissue distribution, expressed in olfactory sensory neurons in the maxillary palp.

It is found in the cell membrane. Its function is as follows. Odorant receptor which mediates acceptance or avoidance behavior, depending on its substrates. The odorant receptor repertoire encodes a large collection of odor stimuli that vary widely in identity, intensity, and duration. May form a complex with Orco to form odorant-sensing units, providing sensitive and prolonged odorant signaling and calcium permeability. The protein is Putative odorant receptor 59c (Or59c) of Drosophila melanogaster (Fruit fly).